A 308-amino-acid chain; its full sequence is GTP cyclohydrolase FolE2 (308 aa).

Belongs to the GTP cyclohydrolase IV family.

The catalysed reaction is GTP + H2O = 7,8-dihydroneopterin 3'-triphosphate + formate + H(+). It functions in the pathway cofactor biosynthesis; 7,8-dihydroneopterin triphosphate biosynthesis; 7,8-dihydroneopterin triphosphate from GTP: step 1/1. In terms of biological role, converts GTP to 7,8-dihydroneopterin triphosphate. This Colwellia psychrerythraea (strain 34H / ATCC BAA-681) (Vibrio psychroerythus) protein is GTP cyclohydrolase FolE2.